We begin with the raw amino-acid sequence, 526 residues long: Amine oxidase [flavin-containing] A (526 aa).

At Met1 the chain carries N-acetylmethionine. Residues 1-497 lie on the Cytoplasmic side of the membrane; that stretch reads MTDLEKPNLA…HTFLERNLPS (497 aa). Ser383 bears the Phosphoserine mark. Cys406 carries the S-8alpha-FAD cysteine modification. A helical; Anchor for type IV membrane protein transmembrane segment spans residues 498–518; sequence VPGLLKITGVSTSVALLCFVL. At 519–526 the chain is on the mitochondrial intermembrane side; that stretch reads YKIKKLPC. Residues 520 to 522 form an interaction with membrane phospholipid headgroups region; that stretch reads KIK.

It belongs to the flavin monoamine oxidase family. Monomer, homo- or heterodimer (containing two subunits of similar size). Each subunit contains a covalently bound flavin. Enzymatically active as monomer. The cofactor is FAD.

It is found in the mitochondrion outer membrane. It catalyses the reaction a secondary aliphatic amine + O2 + H2O = a primary amine + an aldehyde + H2O2. The enzyme catalyses a primary methyl amine + O2 + H2O = an aldehyde + H2O2 + NH4(+). It carries out the reaction (R)-adrenaline + O2 + H2O = (R)-3,4-dihydroxymandelaldehyde + methylamine + H2O2. The catalysed reaction is dopamine + O2 + H2O = 3,4-dihydroxyphenylacetaldehyde + H2O2 + NH4(+). It catalyses the reaction tyramine + O2 + H2O = (4-hydroxyphenyl)acetaldehyde + H2O2 + NH4(+). The enzyme catalyses (R)-noradrenaline + O2 + H2O = (R)-3,4-dihydroxymandelaldehyde + H2O2 + NH4(+). It carries out the reaction serotonin + O2 + H2O = (5-hydroxyindol-3-yl)acetaldehyde + H2O2 + NH4(+). The catalysed reaction is kynuramine + O2 + H2O = 3-(2-aminophenyl)-3-oxopropanal + H2O2 + NH4(+). It catalyses the reaction tryptamine + O2 + H2O = indole-3-acetaldehyde + H2O2 + NH4(+). The enzyme catalyses 2-phenylethylamine + O2 + H2O = 2-phenylacetaldehyde + H2O2 + NH4(+). Catalyzes the oxidative deamination of primary and some secondary amine such as neurotransmitters, with concomitant reduction of oxygen to hydrogen peroxide and has important functions in the metabolism of neuroactive and vasoactive amines in the central nervous system and peripheral tissues. Preferentially oxidizes serotonin. Also catalyzes the oxidative deamination of kynuramine to 3-(2-aminophenyl)-3-oxopropanal that can spontaneously condense to 4-hydroxyquinoline. The polypeptide is Amine oxidase [flavin-containing] A (Rattus norvegicus (Rat)).